The sequence spans 394 residues: tRNA-specific 2-thiouridylase MnmA (394 aa).

Residues 30–37 (AMSGGVDS) and leucine 56 contribute to the ATP site. The active-site Nucleophile is the cysteine 124. A disulfide bond links cysteine 124 and cysteine 220. Position 148 (glycine 148) interacts with ATP. The tract at residues 170–172 (RDQ) is interaction with tRNA. The Cysteine persulfide intermediate role is filled by cysteine 220.

Belongs to the MnmA/TRMU family.

It localises to the cytoplasm. The enzyme catalyses S-sulfanyl-L-cysteinyl-[protein] + uridine(34) in tRNA + AH2 + ATP = 2-thiouridine(34) in tRNA + L-cysteinyl-[protein] + A + AMP + diphosphate + H(+). Functionally, catalyzes the 2-thiolation of uridine at the wobble position (U34) of tRNA, leading to the formation of s(2)U34. This Hyphomonas neptunium (strain ATCC 15444) protein is tRNA-specific 2-thiouridylase MnmA.